A 200-amino-acid chain; its full sequence is Molybdopterin synthase catalytic subunit (200 aa).

A compositionally biased stretch (polar residues) spans 16–30; sequence KLPSSHQSVEDSASE. Residues 16–43 are disordered; sequence KLPSSHQSVEDSASEPSGYEAKDPPQDT. Ser-20 is modified (phosphoserine). Residues 154–155, Lys-170, and 177–179 contribute to the substrate site; these read HR and KKE.

The protein belongs to the MoaE family. MOCS2B subfamily. As to quaternary structure, heterotetramer; composed of 2 small (MOCS2A) and 2 large (MOCS2B) subunits.

Its subcellular location is the cytoplasm. It is found in the cytosol. The catalysed reaction is 2 [molybdopterin-synthase sulfur-carrier protein]-C-terminal-Gly-aminoethanethioate + cyclic pyranopterin phosphate + H2O = molybdopterin + 2 [molybdopterin-synthase sulfur-carrier protein]-C-terminal Gly-Gly + 2 H(+). It functions in the pathway cofactor biosynthesis; molybdopterin biosynthesis. In terms of biological role, catalytic subunit of the molybdopterin synthase complex, a complex that catalyzes the conversion of precursor Z into molybdopterin. Acts by mediating the incorporation of 2 sulfur atoms from thiocarboxylated MOCS2A into precursor Z to generate a dithiolene group. The polypeptide is Molybdopterin synthase catalytic subunit (Rattus norvegicus (Rat)).